The following is a 790-amino-acid chain: Probable E3 ubiquitin-protein ligase MARCHF10 (790 aa).

A disordered region spans residues 33 to 240; sequence LKRQEHKKEP…PQNEPHTALS (208 aa). The span at 34–48 shows a compositional bias: basic and acidic residues; it reads KRQEHKKEPNEKKQE. Positions 61–70 are enriched in low complexity; that stretch reads FSSGSSCKQS. At Ser78 the chain carries Phosphoserine. Positions 218-227 are enriched in basic and acidic residues; the sequence is PLERQKKGDP. The span at 230–240 shows a compositional bias: polar residues; it reads RPQNEPHTALS. Residues 284–308 adopt a coiled-coil conformation; that stretch reads LSLNNEQENYDTEEETRTEEELLLA. Disordered stretches follow at residues 323–416 and 507–569; these read GTSA…EDVS and LSPI…RHLQ. Composition is skewed to polar residues over residues 355–370, 406–416, and 511–520; these read RKTS…SSPG, GVTQVSAEDVS, and RNRNPSAASE. A compositionally biased stretch (basic and acidic residues) spans 521 to 533; the sequence is SHSEDTQGEEERA. Positions 534 to 563 are enriched in polar residues; the sequence is STSQAQESPLLSDLPNPQSSMALGDSPSSP. Residues 633 to 703 form an RING-CH-type zinc finger; that stretch reads DSEEEGDLCR…EMCKQGLLVD (71 aa). Positions 641, 644, 659, 661, 669, 672, 693, and 696 each coordinate Zn(2+). The tract at residues 757–790 is disordered; the sequence is ERMSRNYPQPRPEESESSESGDGNESNVYPGRVI. The segment covering 774 to 783 has biased composition (low complexity); that stretch reads SESGDGNESN.

The catalysed reaction is S-ubiquitinyl-[E2 ubiquitin-conjugating enzyme]-L-cysteine + [acceptor protein]-L-lysine = [E2 ubiquitin-conjugating enzyme]-L-cysteine + N(6)-ubiquitinyl-[acceptor protein]-L-lysine.. It functions in the pathway protein modification; protein ubiquitination. E3 ubiquitin-protein ligase. E3 ubiquitin ligases accept ubiquitin from an E2 ubiquitin-conjugating enzyme in the form of a thioester and then directly transfer the ubiquitin to targeted substrates. This Rattus norvegicus (Rat) protein is Probable E3 ubiquitin-protein ligase MARCHF10 (Marchf10).